A 249-amino-acid chain; its full sequence is tRNA(Phe) (4-demethylwyosine(37)-C(7)) aminocarboxypropyltransferase (249 aa).

S-adenosyl-L-methionine contacts are provided by residues serine 80, arginine 87, glutamate 127, and 154–155; that span reads DN.

Belongs to the class I-like SAM-binding methyltransferase superfamily. TRM5/TYW2 family.

The protein localises to the cytoplasm. The catalysed reaction is 4-demethylwyosine(37) in tRNA(Phe) + S-adenosyl-L-methionine = 4-demethyl-7-[(3S)-3-amino-3-carboxypropyl]wyosine(37) in tRNA(Phe) + S-methyl-5'-thioadenosine + H(+). Its function is as follows. S-adenosyl-L-methionine-dependent transferase that acts as a component of the wyosine derivatives biosynthesis pathway. Catalyzes the transfer of the alpha-amino-alpha-carboxypropyl (acp) group from S-adenosyl-L-methionine to 4-demethylwyosine (imG-14), forming 7-aminocarboxypropyl-demethylwyosine (wybutosine-86) at position 37 of tRNA(Phe). This is tRNA(Phe) (4-demethylwyosine(37)-C(7)) aminocarboxypropyltransferase from Methanocaldococcus jannaschii (strain ATCC 43067 / DSM 2661 / JAL-1 / JCM 10045 / NBRC 100440) (Methanococcus jannaschii).